A 548-amino-acid polypeptide reads, in one-letter code: Cleavage and polyadenylation specificity factor subunit 6 (548 aa).

The 81-residue stretch at 81–161 folds into the RRM domain; it reads IALYIGNLTW…QKPIVTPCNK (81 aa). Residues 169 to 180 show a composition bias toward polar residues; sequence MQSRKTATQAGQ. Disordered stretches follow at residues 169 to 401 and 473 to 548; these read MQSR…MDVV and LHGI…YRHR. Composition is skewed to pro residues over residues 221 to 279, 294 to 362, and 373 to 384; these read PAGP…PPVM, PPGP…PPPG, and GPPPSDPYGRPP. Composition is skewed to basic and acidic residues over residues 385–400 and 490–500; these read PYER…DMDV and RSRERDHSRSR. Residues 501-511 show a composition bias toward basic residues; that stretch reads EKSRRHKSRSR. Positions 512–548 are enriched in basic and acidic residues; sequence DRHDDYYRERSRERERHRDRERDRDRERDREREYRHR.

The protein belongs to the RRM CPSF6/7 family. Component of the cleavage factor Im (CFIm) complex.

The protein localises to the nucleus. It is found in the nucleoplasm. Its subcellular location is the nucleus speckle. It localises to the cytoplasm. Component of the cleavage factor Im (CFIm) complex that functions as an activator of the pre-mRNA 3'-end cleavage and polyadenylation processing required for the maturation of pre-mRNA into functional mRNAs. CFIm contributes to the recruitment of multiprotein complexes on specific sequences on the pre-mRNA 3'-end, so called cleavage and polyadenylation signals (pA signals). Most pre-mRNAs contain multiple pA signals, resulting in alternative cleavage and polyadenylation (APA) producing mRNAs with variable 3'-end formation. The CFIm complex acts as a key regulator of cleavage and polyadenylation site choice during APA through its binding to 5'-UGUA-3' elements localized in the 3'-untranslated region (UTR) for a huge number of pre-mRNAs. Plays a role in mRNA export. This chain is Cleavage and polyadenylation specificity factor subunit 6, found in Xenopus laevis (African clawed frog).